The following is a 173-amino-acid chain: Co-chaperone protein HscB (173 aa).

The J domain maps to 2-74; the sequence is DYFTLFGLPA…LKRAEYMLSL (73 aa).

Belongs to the HscB family. Interacts with HscA and stimulates its ATPase activity. Interacts with IscU.

In terms of biological role, co-chaperone involved in the maturation of iron-sulfur cluster-containing proteins. Seems to help targeting proteins to be folded toward HscA. This is Co-chaperone protein HscB from Photorhabdus laumondii subsp. laumondii (strain DSM 15139 / CIP 105565 / TT01) (Photorhabdus luminescens subsp. laumondii).